The following is a 140-amino-acid chain: Coiled-coil domain-containing protein 126 (140 aa).

An N-terminal signal peptide occupies residues 1 to 35 (MFRTISRKNMSQKLSFLLLVFGLIWGLMLLHYTLQ). N-linked (GlcNAc...) asparagine glycosylation occurs at Asn-110. Residues 118 to 130 (NGTNGNLVPVTTN) show a composition bias toward low complexity. The segment at 118 to 140 (NGTNGNLVPVTTNKRTSVSGSVR) is disordered. A compositionally biased stretch (polar residues) spans 131-140 (KRTSVSGSVR).

Its subcellular location is the secreted. The sequence is that of Coiled-coil domain-containing protein 126 (Ccdc126) from Mus musculus (Mouse).